A 358-amino-acid chain; its full sequence is Peroxidase 12 (358 aa).

Residues Met-1–Ala-31 form the signal peptide. 4 disulfides stabilise this stretch: Cys-53-Cys-134, Cys-86-Cys-91, Cys-140-Cys-335, and Cys-220-Cys-247. His-84 (proton acceptor) is an active-site residue. The Ca(2+) site is built by Asp-85, Val-88, Gly-90, Glu-92, and Ser-94. Residue Pro-183 coordinates substrate. Asn-188 and Asn-202 each carry an N-linked (GlcNAc...) asparagine glycan. His-213 is a heme b binding site. Residue Thr-214 coordinates Ca(2+). The N-linked (GlcNAc...) asparagine glycan is linked to Asn-251. Ca(2+)-binding residues include Asp-259, Ser-262, and Asp-267. Asn-334 carries N-linked (GlcNAc...) asparagine glycosylation.

The protein belongs to the peroxidase family. Classical plant (class III) peroxidase subfamily. Heme b serves as cofactor. It depends on Ca(2+) as a cofactor. In terms of tissue distribution, expressed in roots and leaves.

The protein localises to the secreted. It is found in the vacuole. The catalysed reaction is 2 a phenolic donor + H2O2 = 2 a phenolic radical donor + 2 H2O. In terms of biological role, removal of H(2)O(2), oxidation of toxic reductants, biosynthesis and degradation of lignin, suberization, auxin catabolism, response to environmental stresses such as wounding, pathogen attack and oxidative stress. These functions might be dependent on each isozyme/isoform in each plant tissue. Exhibits a Ca(2+)-pectate binding affinity which could be interpreted in vivo as a specificity to interact with the pectic structure of the cell wall. The chain is Peroxidase 12 (PER12) from Arabidopsis thaliana (Mouse-ear cress).